The following is a 276-amino-acid chain: Tyrosinase (276 aa).

6 residues coordinate Cu cation: H38, H56, H66, H193, H197, and H219.

Belongs to the tyrosinase family. It depends on Cu(2+) as a cofactor.

It carries out the reaction 2 L-dopa + O2 = 2 L-dopaquinone + 2 H2O. The enzyme catalyses L-tyrosine + O2 = L-dopaquinone + H2O. Its function is as follows. This is a copper-containing oxidase that functions in the formation of pigments such as melanins and other polyphenolic compounds. This Streptomyces galbus protein is Tyrosinase (melC2).